Reading from the N-terminus, the 93-residue chain is YcgL domain-containing protein Shal_1837 (93 aa).

One can recognise a YcgL domain in the interval 1-85 (MICAVYKSRR…PVVNLLEQHK (85 aa)).

This is YcgL domain-containing protein Shal_1837 from Shewanella halifaxensis (strain HAW-EB4).